Here is a 264-residue protein sequence, read N- to C-terminus: uncharacterized protein (264 aa).

Polar residues-rich tracts occupy residues 1–18 (MFEN…SSRS), 73–83 (SLGSVGTTEVN), and 126–139 (KTTQ…QPVL). Disordered stretches follow at residues 1 to 47 (MFEN…WVGS) and 68 to 264 (RKEP…LSFE). Positions 149–171 (SSGQPQVSSSAQPSPADASQPEA) are enriched in low complexity. The segment covering 194-212 (LIHKDGQDDPKLKVTECRR) has biased composition (basic and acidic residues). 4 positions are modified to phosphoserine: Ser-214, Ser-215, Ser-241, and Ser-250.

This is an uncharacterized protein from Bos taurus (Bovine).